Here is a 331-residue protein sequence, read N- to C-terminus: MTMHIRWRGMELPSSLEVDRDSLTQTYGKFSAEPFERGFGASIGNSMRRVLLSSLVGSAVTQIKIRGAQHEFTTIPGVLEDVTDIVLNVKSLIVNSNTDSTRVITVERNTAGVVTGADVQTDADVEIINKDHVICTLTDDVPFMMEMVVETGRGYVPSTEHSSVDHEIGIIPIDAVFSPIVRVRYEVEATRVGQKTNYDRLNLEIWTDGTINPEMALTEAAKILRKHLNPFVQYRELGPSIFSAARGGAGSPEAQLEAKLNMTLADLRLSVRANNCLESENIMTVRDLVQRTEDSLLEVRNFGDTTLNEVREKLSQYGLHLGMRVPNQPLF.

An alpha N-terminal domain (alpha-NTD) region spans residues 1–235; that stretch reads MTMHIRWRGM…KHLNPFVQYR (235 aa). Positions 255 to 331 are alpha C-terminal domain (alpha-CTD); the sequence is QLEAKLNMTL…GMRVPNQPLF (77 aa).

It belongs to the RNA polymerase alpha chain family. As to quaternary structure, homodimer. The RNAP catalytic core consists of 2 alpha, 1 beta, 1 beta' and 1 omega subunit. When a sigma factor is associated with the core the holoenzyme is formed, which can initiate transcription.

It catalyses the reaction RNA(n) + a ribonucleoside 5'-triphosphate = RNA(n+1) + diphosphate. In terms of biological role, DNA-dependent RNA polymerase catalyzes the transcription of DNA into RNA using the four ribonucleoside triphosphates as substrates. In Rhodopirellula baltica (strain DSM 10527 / NCIMB 13988 / SH1), this protein is DNA-directed RNA polymerase subunit alpha.